The chain runs to 119 residues: Large ribosomal subunit protein bL20 (119 aa).

It belongs to the bacterial ribosomal protein bL20 family.

Binds directly to 23S ribosomal RNA and is necessary for the in vitro assembly process of the 50S ribosomal subunit. It is not involved in the protein synthesizing functions of that subunit. This chain is Large ribosomal subunit protein bL20, found in Cellvibrio japonicus (strain Ueda107) (Pseudomonas fluorescens subsp. cellulosa).